The chain runs to 374 residues: Heme A synthase (374 aa).

The segment at 1–22 (MSDHIRAASSPSRHGSEHGWQH) is disordered. A run of 5 helical transmembrane segments spans residues 32–52 (ILVA…VMLG), 118–138 (RLWG…LAVT), 149–169 (LILI…MVAS), 184–204 (VVHL…ALSV), and 226–246 (LGLV…HAGL). His-281 provides a ligand contact to heme. The next 3 membrane-spanning stretches (helical) occupy residues 283–300 (LLAT…LIGF), 309–329 (AVLP…ATLL), and 332–352 (VAVP…TAAI). Heme is bound at residue His-340.

The protein belongs to the COX15/CtaA family. Type 2 subfamily. In terms of assembly, interacts with CtaB. It depends on heme b as a cofactor.

The protein resides in the cell membrane. It carries out the reaction Fe(II)-heme o + 2 A + H2O = Fe(II)-heme a + 2 AH2. The protein operates within porphyrin-containing compound metabolism; heme A biosynthesis; heme A from heme O: step 1/1. Functionally, catalyzes the conversion of heme O to heme A by two successive hydroxylations of the methyl group at C8. The first hydroxylation forms heme I, the second hydroxylation results in an unstable dihydroxymethyl group, which spontaneously dehydrates, resulting in the formyl group of heme A. The protein is Heme A synthase of Granulibacter bethesdensis (strain ATCC BAA-1260 / CGDNIH1).